We begin with the raw amino-acid sequence, 430 residues long: Enolase (430 aa).

Gln167 contacts (2R)-2-phosphoglycerate. Catalysis depends on Glu209, which acts as the Proton donor. 3 residues coordinate Mg(2+): Asp246, Glu289, and Asp316. Lys341, Arg370, Ser371, and Lys392 together coordinate (2R)-2-phosphoglycerate. Residue Lys341 is the Proton acceptor of the active site.

This sequence belongs to the enolase family. Component of the RNA degradosome, a multiprotein complex involved in RNA processing and mRNA degradation. Requires Mg(2+) as cofactor.

Its subcellular location is the cytoplasm. It localises to the secreted. It is found in the cell surface. The enzyme catalyses (2R)-2-phosphoglycerate = phosphoenolpyruvate + H2O. It functions in the pathway carbohydrate degradation; glycolysis; pyruvate from D-glyceraldehyde 3-phosphate: step 4/5. Functionally, catalyzes the reversible conversion of 2-phosphoglycerate (2-PG) into phosphoenolpyruvate (PEP). It is essential for the degradation of carbohydrates via glycolysis. The protein is Enolase of Alteromonas mediterranea (strain DSM 17117 / CIP 110805 / LMG 28347 / Deep ecotype).